Consider the following 277-residue polypeptide: L-aspartate oxidase (277 aa).

Residue Arg-23 is the Proton donor/acceptor of the active site. FAD is bound by residues Glu-106 and 122–123 (SL). Disordered stretches follow at residues 142–161 (LRRGWPPPAPPDLSPRPPPA) and 234–277 (DYPA…ETRS). Over residues 146–161 (WPPPAPPDLSPRPPPA) the composition is skewed to pro residues.

The protein belongs to the FAD-dependent oxidoreductase 2 family. NadB subfamily. Requires FAD as cofactor.

It is found in the cytoplasm. It carries out the reaction L-aspartate + O2 = iminosuccinate + H2O2. It functions in the pathway cofactor biosynthesis; NAD(+) biosynthesis; iminoaspartate from L-aspartate (oxidase route): step 1/1. Functionally, catalyzes the oxidation of L-aspartate to iminoaspartate, the first step in the de novo biosynthesis of NAD(+). The protein is L-aspartate oxidase (nadB) of Rhodospirillum rubrum.